The primary structure comprises 192 residues: UPF0312 protein PSPTO_5071 (192 aa).

The N-terminal stretch at 1–23 (MLKKSLAALALGTALLSAGQAMA) is a signal peptide.

This sequence belongs to the UPF0312 family. Type 1 subfamily.

It is found in the periplasm. The protein is UPF0312 protein PSPTO_5071 of Pseudomonas syringae pv. tomato (strain ATCC BAA-871 / DC3000).